The sequence spans 92 residues: Small ribosomal subunit protein uS19 (92 aa).

This sequence belongs to the universal ribosomal protein uS19 family.

Protein S19 forms a complex with S13 that binds strongly to the 16S ribosomal RNA. The chain is Small ribosomal subunit protein uS19 from Corynebacterium diphtheriae (strain ATCC 700971 / NCTC 13129 / Biotype gravis).